We begin with the raw amino-acid sequence, 50 residues long: Small ribosomal subunit protein uS14 (50 aa).

Positions 15, 18, 33, and 36 each coordinate Zn(2+).

It belongs to the universal ribosomal protein uS14 family. Zinc-binding uS14 subfamily. Part of the 30S ribosomal subunit. Requires Zn(2+) as cofactor.

Functionally, binds 16S rRNA, required for the assembly of 30S particles. This Methanosarcina barkeri (strain Fusaro / DSM 804) protein is Small ribosomal subunit protein uS14.